The sequence spans 204 residues: MDTFNFIICISALFHSTYGDDGGTPMLDTETQNYLVDLHNLLRRSVDPTAKDMLKMEWSPGAALNAQNAAAKCVMQHSSATERQIQDPFNYVCGENIYVTTAKPDWAAAVNSWFNERNDFTYGVGPNSDKMIGHYTQVAWAKTYLLGCGLAFCPGNYYPYVSICHYCPMGNMINSIKTPYEAGEWCASCPESCEDKLCTSNPTA.

A signal peptide spans 1-19 (MDTFNFIICISALFHSTYG). The region spanning 36 to 138 (VDLHNLLRRS…DKMIGHYTQV (103 aa)) is the SCP domain. The helical transmembrane segment at 140–161 (WAKTYLLGCGLAFCPGNYYPYV) threads the bilayer.

It belongs to the CRISP family. As to expression, expressed only in oviduct.

Its subcellular location is the membrane. The protein resides in the secreted. Functionally, involved in sperm chemoattraction. In Xenopus tropicalis (Western clawed frog), this protein is Allurin (crisp-a).